The chain runs to 335 residues: Karyogamy protein KAR4 (335 aa).

Residues 1-25 (MAFQDPTYDQNKSRHINNSHLQGPN) form a disordered region. Polar residues predominate over residues 16–25 (INNSHLQGPN).

This sequence belongs to the MT-A70-like family. As to quaternary structure, component of the MIS (mRNA N6-methyladenosine (m6A) methylation) complex, at least composed of IME4, KAR4, MUM2, SLZ1, and VIR1. Interacts with VIR1.

It is found in the nucleus. The protein resides in the cytoplasm. Component of the MIS complex, a complex that mediates N6-methyladenosine (m6A) methylation of meiotic mRNAs and is required for initiation of meiosis, progression through the meiotic divisions and sporulation. May assist STE12 in the pheromone-dependent expression of KAR3 and CIK1. The protein is Karyogamy protein KAR4 (KAR4) of Saccharomyces cerevisiae (strain ATCC 204508 / S288c) (Baker's yeast).